Consider the following 156-residue polypeptide: Small ribosomal subunit protein uS7 (156 aa).

It belongs to the universal ribosomal protein uS7 family. As to quaternary structure, part of the 30S ribosomal subunit. Contacts proteins S9 and S11.

Its function is as follows. One of the primary rRNA binding proteins, it binds directly to 16S rRNA where it nucleates assembly of the head domain of the 30S subunit. Is located at the subunit interface close to the decoding center, probably blocks exit of the E-site tRNA. The protein is Small ribosomal subunit protein uS7 of Renibacterium salmoninarum (strain ATCC 33209 / DSM 20767 / JCM 11484 / NBRC 15589 / NCIMB 2235).